The sequence spans 2176 residues: Protein sidekick-2 (2176 aa).

The N-terminal stretch at 1–24 is a signal peptide; sequence MFSSMWRLPLWTLLALHRIHSAGA. Over 25–1936 the chain is Extracellular; the sequence is QDDVPPYFKT…ASPFYEEWWF (1912 aa). Ig-like C2-type domains follow at residues 30–112, 117–204, 219–298, 312–402, 406–495, and 500–589; these read PYFK…TEVQ, GSFE…QPIT, PTII…SSVA, PQFV…LAVT, PNIT…ADLV, and TRIT…AHLR. C52 and C95 form a disulfide bridge. N197 carries N-linked (GlcNAc...) asparagine glycosylation. Cystine bridges form between C241-C288, C334-C384, C427-C479, and C521-C573. Fibronectin type-III domains lie at 596–692, 697–793, 798–897, 901–995, 999–1098, 1103–1201, 1206–1303, 1307–1401, 1406–1503, 1508–1625, 1630–1726, 1730–1825, and 1828–1930; these read APEH…LPEE, PPQN…TLQG, PPGN…THED, PVGH…VPPE, APTN…TLQA, APAN…TRES, GPTN…TLDD, PPMG…TEKR, PPSK…TLQA, APTI…VGEA, APQN…TQQA, APGS…TGPG, and APGP…ASPF. N-linked (GlcNAc...) asparagine glycosylation occurs at N747. 2 N-linked (GlcNAc...) asparagine glycosylation sites follow: N940 and N952. An N-linked (GlcNAc...) asparagine glycan is attached at N1106. N1592 is a glycosylation site (N-linked (GlcNAc...) asparagine). Residues 1712 to 1734 form a disordered region; it reads DGPRSTPTRGQTQQAAPSAPGSV. Residues 1716 to 1727 show a composition bias toward polar residues; the sequence is STPTRGQTQQAA. Residues 1937–1957 form a helical membrane-spanning segment; the sequence is LVVIALVGLIFILLLVFVLII. The Cytoplasmic segment spans residues 1958–2176; sequence RGQSKKYSKK…APIAGFSSFV (219 aa). Disordered stretches follow at residues 2013–2032, 2043–2070, and 2102–2176; these read GLYTRSPPRPSPGSLHYSDE, AESSSLTEKPSEISDSQGSDSEYEVDTN, and QAYS…SSFV. Composition is skewed to polar residues over residues 2044 to 2070 and 2119 to 2129; these read ESSSLTEKPSEISDSQGSDSEYEVDTN and VPNSNSTQQGS. Residues 2170–2176 carry the PDZ-binding motif; that stretch reads AGFSSFV.

It belongs to the sidekick family. In terms of assembly, homodimer; mediates homophilic interactions to promote cell adhesion. Interacts (via PDZ-binding motif) with MAGI1, MAGI2, DLG2, DLG3 and DLG4. In terms of tissue distribution, expressed in retinal ganglion cells (RGCs) that form synapses in distinct inner plexiform layer (IPL) sublaminae. Specifically expressed in specific subsets of retinal ganglion cells (RGCs), named W3B-RGCs, that specifically respond when the timing of the movement of a small object differs from that of the background, but not when they coincide (at protein level). Also present in excitatory amacrine cell type called VG3-ACs, that provide strong and selective input W3B-RGCs (at protein level). Expressed at low levels in the glomeruli.

The protein localises to the cell membrane. The protein resides in the synapse. Functionally, adhesion molecule that promotes lamina-specific synaptic connections in the retina and is specifically required for the formation of neuronal circuits that detect motion. Acts by promoting formation of synapses between two specific retinal cell types: the retinal ganglion cells W3B-RGCs and the excitatory amacrine cells VG3-ACs. Formation of synapses between these two cells plays a key role in detection of motion. Promotes synaptic connectivity via homophilic interactions. The sequence is that of Protein sidekick-2 from Mus musculus (Mouse).